Here is a 302-residue protein sequence, read N- to C-terminus: Phosphoribosylaminoimidazole-succinocarboxamide synthase (302 aa).

Belongs to the SAICAR synthetase family.

The catalysed reaction is 5-amino-1-(5-phospho-D-ribosyl)imidazole-4-carboxylate + L-aspartate + ATP = (2S)-2-[5-amino-1-(5-phospho-beta-D-ribosyl)imidazole-4-carboxamido]succinate + ADP + phosphate + 2 H(+). The protein operates within purine metabolism; IMP biosynthesis via de novo pathway; 5-amino-1-(5-phospho-D-ribosyl)imidazole-4-carboxamide from 5-amino-1-(5-phospho-D-ribosyl)imidazole-4-carboxylate: step 1/2. The chain is Phosphoribosylaminoimidazole-succinocarboxamide synthase from Leptothrix cholodnii (strain ATCC 51168 / LMG 8142 / SP-6) (Leptothrix discophora (strain SP-6)).